A 388-amino-acid chain; its full sequence is Mannosyl-3-phosphoglycerate synthase (388 aa).

Belongs to the glycosyltransferase 2 family.

It is found in the cytoplasm. It carries out the reaction (2R)-3-phosphoglycerate + GDP-alpha-D-mannose = 2-O-(alpha-D-mannosyl)-3-phosphoglycerate + GDP + H(+). It participates in carbohydrate biosynthesis; 2-(alpha-D-mannosyl)-D-glycerate biosynthesis; 2-(alpha-D-mannosyl)-D-glycerate from GDP-alpha-D-mannose (MPG route): step 1/2. Its function is as follows. Transfers a mannosyl group from GDP-mannose to phosphoglycerate to form mannosyl-3-phosphoglycerate (MPG). This chain is Mannosyl-3-phosphoglycerate synthase (mngA), found in Aeropyrum pernix (strain ATCC 700893 / DSM 11879 / JCM 9820 / NBRC 100138 / K1).